The primary structure comprises 177 residues: Large ribosomal subunit protein uL6 (177 aa).

Belongs to the universal ribosomal protein uL6 family. In terms of assembly, part of the 50S ribosomal subunit.

This protein binds to the 23S rRNA, and is important in its secondary structure. It is located near the subunit interface in the base of the L7/L12 stalk, and near the tRNA binding site of the peptidyltransferase center. The sequence is that of Large ribosomal subunit protein uL6 from Methylibium petroleiphilum (strain ATCC BAA-1232 / LMG 22953 / PM1).